The chain runs to 210 residues: uncharacterized protein (210 aa).

Positions 2–91 (SRHPEVKWAQ…AEAKWWKKLV (90 aa)) constitute a CS domain. The disordered stretch occupies residues 165-210 (GMGGMGGMDEFEDESDDEEEVSKPQDAEKAAEAGKSQESDAKTETS). A compositionally biased stretch (acidic residues) spans 173–184 (DEFEDESDDEEE). Residues 185–210 (VSKPQDAEKAAEAGKSQESDAKTETS) are compositionally biased toward basic and acidic residues.

This is an uncharacterized protein from Oryza sativa subsp. indica (Rice).